The following is a 339-amino-acid chain: Cathepsin B (339 aa).

Residues 1 to 17 (MWQLWASLCCLLVLANA) form the signal peptide. Residues 18–79 (RSRPSFHPLS…QRVMFTEDLK (62 aa)) constitute a propeptide, activation peptide. 6 disulfides stabilise this stretch: C93/C122, C105/C150, C141/C207, C142/C146, C179/C211, and C187/C198. C108 is a catalytic residue. N192 carries an N-linked (GlcNAc...) asparagine glycan. Residue K220 is modified to N6-acetyllysine. Active-site residues include H278 and N298. Residues 334–339 (QYWEKI) constitute a propeptide that is removed on maturation.

Belongs to the peptidase C1 family. In terms of assembly, dimer of a heavy chain and a light chain cross-linked by a disulfide bond. Interacts with SRPX2. Directly interacts with SHKBP1. As to expression, expressed in the stratum spinosum of the epidermis. Weak expression is detected in the stratum granulosum.

It localises to the lysosome. The protein resides in the melanosome. The protein localises to the secreted. Its subcellular location is the extracellular space. It is found in the apical cell membrane. It catalyses the reaction Hydrolysis of proteins with broad specificity for peptide bonds. Preferentially cleaves -Arg-Arg-|-Xaa bonds in small molecule substrates (thus differing from cathepsin L). In addition to being an endopeptidase, shows peptidyl-dipeptidase activity, liberating C-terminal dipeptides.. Its activity is regulated as follows. Inhibited by leupeptin. Its function is as follows. Thiol protease which is believed to participate in intracellular degradation and turnover of proteins. Cleaves matrix extracellular phosphoglycoprotein MEPE. Involved in the solubilization of cross-linked TG/thyroglobulin in the thyroid follicle lumen. Has also been implicated in tumor invasion and metastasis. This is Cathepsin B (CTSB) from Homo sapiens (Human).